The primary structure comprises 575 residues: Proline--tRNA ligase (575 aa).

It belongs to the class-II aminoacyl-tRNA synthetase family. ProS type 1 subfamily. As to quaternary structure, homodimer.

The protein localises to the cytoplasm. It carries out the reaction tRNA(Pro) + L-proline + ATP = L-prolyl-tRNA(Pro) + AMP + diphosphate. Functionally, catalyzes the attachment of proline to tRNA(Pro) in a two-step reaction: proline is first activated by ATP to form Pro-AMP and then transferred to the acceptor end of tRNA(Pro). As ProRS can inadvertently accommodate and process non-cognate amino acids such as alanine and cysteine, to avoid such errors it has two additional distinct editing activities against alanine. One activity is designated as 'pretransfer' editing and involves the tRNA(Pro)-independent hydrolysis of activated Ala-AMP. The other activity is designated 'posttransfer' editing and involves deacylation of mischarged Ala-tRNA(Pro). The misacylated Cys-tRNA(Pro) is not edited by ProRS. This is Proline--tRNA ligase from Heliobacterium modesticaldum (strain ATCC 51547 / Ice1).